Reading from the N-terminus, the 220-residue chain is Ribosomal RNA large subunit methyltransferase E (220 aa).

5 residues coordinate S-adenosyl-L-methionine: Gly-60, Trp-62, Asp-92, Asp-108, and Asp-133. Lys-173 serves as the catalytic Proton acceptor. Residues 197 to 220 (RKPKASRDKSSETFILGRQLKQPR) are disordered.

Belongs to the class I-like SAM-binding methyltransferase superfamily. RNA methyltransferase RlmE family.

The protein resides in the cytoplasm. It catalyses the reaction uridine(2552) in 23S rRNA + S-adenosyl-L-methionine = 2'-O-methyluridine(2552) in 23S rRNA + S-adenosyl-L-homocysteine + H(+). Functionally, specifically methylates the uridine in position 2552 of 23S rRNA at the 2'-O position of the ribose in the fully assembled 50S ribosomal subunit. In Burkholderia ambifaria (strain ATCC BAA-244 / DSM 16087 / CCUG 44356 / LMG 19182 / AMMD) (Burkholderia cepacia (strain AMMD)), this protein is Ribosomal RNA large subunit methyltransferase E.